The chain runs to 81 residues: Acyl carrier protein (81 aa).

Positions 2-77 (ASVEEKVKQI…DAVDYITAHA (76 aa)) constitute a Carrier domain. Ser-37 bears the O-(pantetheine 4'-phosphoryl)serine mark.

This sequence belongs to the acyl carrier protein (ACP) family. In terms of processing, 4'-phosphopantetheine is transferred from CoA to a specific serine of apo-ACP by AcpS. This modification is essential for activity because fatty acids are bound in thioester linkage to the sulfhydryl of the prosthetic group.

It localises to the cytoplasm. Its pathway is lipid metabolism; fatty acid biosynthesis. Carrier of the growing fatty acid chain in fatty acid biosynthesis. The protein is Acyl carrier protein of Koribacter versatilis (strain Ellin345).